The sequence spans 881 residues: Protein P (881 aa).

The tract at residues 1–184 (MHPFYQLFRN…GKPYSWEHRQ (184 aa)) is terminal protein domain (TP). The segment at 185–384 (LEQHNGQQHK…YCLHHIVSSI (200 aa)) is spacer. The tract at residues 263–351 (IPCESKAPSE…PAGICRGTES (89 aa)) is disordered. Composition is skewed to polar residues over residues 270–279 (PSEQQQSSLR) and 287–314 (NQIQ…IQSG). A compositionally biased stretch (basic and acidic residues) spans 326 to 340 (FERHTPSFDNEKSDR). Positions 385–726 (DDWGPCTFDG…YGELWPVARQ (342 aa)) are polymerase/reverse transcriptase domain (RT). Residues 395 to 636 (DVTIRSPRTP…HTLHFMGYTI (242 aa)) form the Reverse transcriptase domain. The Mg(2+) site is built by aspartate 467, aspartate 587, and aspartate 588.

It belongs to the hepadnaviridae P protein family.

The enzyme catalyses DNA(n) + a 2'-deoxyribonucleoside 5'-triphosphate = DNA(n+1) + diphosphate. It carries out the reaction Endonucleolytic cleavage to 5'-phosphomonoester.. With respect to regulation, activated by host HSP70 and HSP40 in vitro to be able to bind the epsilon loop of the pgRNA. Because deletion of the RNase H region renders the protein partly chaperone-independent, the chaperones may be needed indirectly to relieve occlusion of the RNA-binding site by this domain. Inhibited by several reverse-transcriptase inhibitors: Lamivudine, Adefovir and Entecavir. Functionally, multifunctional enzyme that converts the viral RNA genome into dsDNA in viral cytoplasmic capsids. This enzyme displays a DNA polymerase activity that can copy either DNA or RNA templates, and a ribonuclease H (RNase H) activity that cleaves the RNA strand of RNA-DNA heteroduplexes in a partially processive 3'- to 5'-endonucleasic mode. Neo-synthesized pregenomic RNA (pgRNA) are encapsidated together with the P protein, and reverse-transcribed inside the nucleocapsid. Initiation of reverse-transcription occurs first by binding the epsilon loop on the pgRNA genome, and is initiated by protein priming, thereby the 5'-end of (-)DNA is covalently linked to P protein. Partial (+)DNA is synthesized from the (-)DNA template and generates the relaxed circular DNA (RC-DNA) genome. After budding and infection, the RC-DNA migrates in the nucleus, and is converted into a plasmid-like covalently closed circular DNA (cccDNA). The activity of P protein does not seem to be necessary for cccDNA generation, and is presumably released from (+)DNA by host nuclear DNA repair machinery. The chain is Protein P from Ground squirrel hepatitis virus (strain 27) (GSHV).